The primary structure comprises 47 residues: Single-stranded DNA-binding protein (47 aa).

Homodimer in the absence of DNA, monomer when binding DNA.

In terms of biological role, binds preferentially to single-stranded DNA and therefore, destabilizes double-stranded DNA. It is involved in DNA replication, repair and recombination. Binds ss-DNA as the replication fork advances and stimulates the replisome processivity and accuracy. The protein is Single-stranded DNA-binding protein (32) of Escherichia coli (Bacteriophage RB6).